A 610-amino-acid chain; its full sequence is ATP-dependent zinc metalloprotease FtsH (610 aa).

Residues 1-3 (MAK) are Cytoplasmic-facing. A helical membrane pass occupies residues 4-24 (NLMLWLVIAVVLMSIFQNFSA). Residues 25–97 (NNINNRKIDY…IIGAAPEEQS (73 aa)) are Extracellular-facing. A helical membrane pass occupies residues 98 to 118 (FFTAIFISWFPMLLLIGVWVF). The Cytoplasmic portion of the chain corresponds to 119–610 (FMRQMQVGGG…SNICTDDDNN (492 aa)). ATP is bound at residue 192-199 (GPPGTGKT). Histidine 414 contributes to the Zn(2+) binding site. Glutamate 415 is a catalytic residue. Zn(2+)-binding residues include histidine 418 and aspartate 492.

This sequence in the central section; belongs to the AAA ATPase family. In the C-terminal section; belongs to the peptidase M41 family. Homohexamer. It depends on Zn(2+) as a cofactor.

It localises to the cell membrane. Acts as a processive, ATP-dependent zinc metallopeptidase for both cytoplasmic and membrane proteins. Plays a role in the quality control of integral membrane proteins. In Buchnera aphidicola subsp. Baizongia pistaciae (strain Bp), this protein is ATP-dependent zinc metalloprotease FtsH.